The primary structure comprises 433 residues: Chaperone SurA (433 aa).

A signal peptide spans 1 to 28 (MTAITRITLTGALLAAALLLAALQPARA). PpiC domains are found at residues 174-277 (NQEY…KLMD) and 286-386 (VTET…QVTD).

Its subcellular location is the periplasm. It carries out the reaction [protein]-peptidylproline (omega=180) = [protein]-peptidylproline (omega=0). Functionally, chaperone involved in the correct folding and assembly of outer membrane proteins. Recognizes specific patterns of aromatic residues and the orientation of their side chains, which are found more frequently in integral outer membrane proteins. May act in both early periplasmic and late outer membrane-associated steps of protein maturation. The protein is Chaperone SurA of Alkalilimnicola ehrlichii (strain ATCC BAA-1101 / DSM 17681 / MLHE-1).